Consider the following 520-residue polypeptide: GMP synthase [glutamine-hydrolyzing] (520 aa).

Residues 12–202 form the Glutamine amidotransferase type-1 domain; it reads KIIVLDFGSQ…AFDVCGCTGD (191 aa). Residue cysteine 89 is the Nucleophile of the active site. Catalysis depends on residues histidine 176 and glutamate 178. Residues 203 to 395 form the GMPS ATP-PPase domain; that stretch reads WSMENFIDME…LGMPDAIVWR (193 aa). ATP is bound at residue 230–236; sequence SGGVDSS.

In terms of assembly, homodimer.

The catalysed reaction is XMP + L-glutamine + ATP + H2O = GMP + L-glutamate + AMP + diphosphate + 2 H(+). It functions in the pathway purine metabolism; GMP biosynthesis; GMP from XMP (L-Gln route): step 1/1. Functionally, catalyzes the synthesis of GMP from XMP. This is GMP synthase [glutamine-hydrolyzing] from Enterococcus faecalis (strain ATCC 700802 / V583).